The sequence spans 79 residues: Sulfur carrier protein TusA (79 aa).

The Cysteine persulfide intermediate role is filled by Cys-16.

The protein belongs to the sulfur carrier protein TusA family.

It is found in the cytoplasm. In terms of biological role, sulfur carrier protein which probably makes part of a sulfur-relay system. The polypeptide is Sulfur carrier protein TusA (Pseudomonas aeruginosa (strain LESB58)).